We begin with the raw amino-acid sequence, 427 residues long: Septin-8-A (427 aa).

Residues 39 to 305 (QGFCFNILCV…ELYRRCKLEE (267 aa)) enclose the Septin-type G domain. Positions 49–56 (GETGIGKS) are G1 motif. Residues 49–56 (GETGIGKS), Gly-104, 185–193 (KADTISKSE), Gly-239, and Arg-254 each bind GTP. The tract at residues 101-104 (DTVG) is G3 motif. The interval 184-187 (AKAD) is G4 motif. The stretch at 320–409 (LQETYEAKRK…KAAMEALQSQ (90 aa)) forms a coiled coil. A compositionally biased stretch (basic and acidic residues) spans 376–389 (QEESKKVEDKRRDL). A disordered region spans residues 376–427 (QEESKKVEDKRRDLEEEMNSFNRRKAAMEALQSQSFQATSQQPLKKDKDRKN). The span at 406 to 418 (LQSQSFQATSQQP) shows a compositional bias: polar residues.

It belongs to the TRAFAC class TrmE-Era-EngA-EngB-Septin-like GTPase superfamily. Septin GTPase family.

The chain is Septin-8-A (sept8-a) from Xenopus laevis (African clawed frog).